The following is a 472-amino-acid chain: ATP synthase subunit beta (472 aa).

ATP is bound at residue 156–163 (GGAGVGKT).

Belongs to the ATPase alpha/beta chains family. As to quaternary structure, F-type ATPases have 2 components, CF(1) - the catalytic core - and CF(0) - the membrane proton channel. CF(1) has five subunits: alpha(3), beta(3), gamma(1), delta(1), epsilon(1). CF(0) has three main subunits: a(1), b(2) and c(9-12). The alpha and beta chains form an alternating ring which encloses part of the gamma chain. CF(1) is attached to CF(0) by a central stalk formed by the gamma and epsilon chains, while a peripheral stalk is formed by the delta and b chains.

It is found in the cell membrane. The enzyme catalyses ATP + H2O + 4 H(+)(in) = ADP + phosphate + 5 H(+)(out). Its function is as follows. Produces ATP from ADP in the presence of a proton gradient across the membrane. The catalytic sites are hosted primarily by the beta subunits. The polypeptide is ATP synthase subunit beta (Symbiobacterium thermophilum (strain DSM 24528 / JCM 14929 / IAM 14863 / T)).